Here is a 312-residue protein sequence, read N- to C-terminus: tRNA pseudouridine synthase B (312 aa).

Asp47 serves as the catalytic Nucleophile.

Belongs to the pseudouridine synthase TruB family. Type 1 subfamily.

It catalyses the reaction uridine(55) in tRNA = pseudouridine(55) in tRNA. Functionally, responsible for synthesis of pseudouridine from uracil-55 in the psi GC loop of transfer RNAs. The sequence is that of tRNA pseudouridine synthase B from Vibrio cholerae serotype O1 (strain M66-2).